We begin with the raw amino-acid sequence, 336 residues long: Nucleoid-associated protein ECA2747 (336 aa).

Residues 317–336 (KGTPPNLRDQLQRRTSGGKQ) are disordered.

It belongs to the YejK family.

It localises to the cytoplasm. It is found in the nucleoid. This chain is Nucleoid-associated protein ECA2747, found in Pectobacterium atrosepticum (strain SCRI 1043 / ATCC BAA-672) (Erwinia carotovora subsp. atroseptica).